Consider the following 397-residue polypeptide: Adenylosuccinate synthetase (397 aa).

Residues 11–17 and 39–41 each bind GTP; these read GDEGKGK and GHT. The Proton acceptor role is filled by Asp-12. Mg(2+) is bound by residues Asp-12 and Gly-39. Residues 12-15, 37-40, Thr-125, Arg-139, Gln-212, Thr-227, and Arg-290 contribute to the IMP site; these read DEGK and NAGH. The Proton donor role is filled by His-40. 286 to 292 serves as a coordination point for substrate; the sequence is STTGRPR. GTP-binding positions include Arg-292, 318–320, and 386–388; these read KAD and STG.

Belongs to the adenylosuccinate synthetase family. As to quaternary structure, homodimer. Mg(2+) is required as a cofactor.

The protein localises to the cytoplasm. It catalyses the reaction IMP + L-aspartate + GTP = N(6)-(1,2-dicarboxyethyl)-AMP + GDP + phosphate + 2 H(+). The protein operates within purine metabolism; AMP biosynthesis via de novo pathway; AMP from IMP: step 1/2. Plays an important role in the de novo pathway of purine nucleotide biosynthesis. Catalyzes the first committed step in the biosynthesis of AMP from IMP. This chain is Adenylosuccinate synthetase, found in Thermotoga maritima (strain ATCC 43589 / DSM 3109 / JCM 10099 / NBRC 100826 / MSB8).